Consider the following 169-residue polypeptide: uncharacterized protein (169 aa).

This is an uncharacterized protein from Methanocaldococcus jannaschii (strain ATCC 43067 / DSM 2661 / JAL-1 / JCM 10045 / NBRC 100440) (Methanococcus jannaschii).